The primary structure comprises 126 residues: Large ribosomal subunit protein bL12 (126 aa).

It belongs to the bacterial ribosomal protein bL12 family. In terms of assembly, homodimer. Part of the ribosomal stalk of the 50S ribosomal subunit. Forms a multimeric L10(L12)X complex, where L10 forms an elongated spine to which 2 to 4 L12 dimers bind in a sequential fashion. Binds GTP-bound translation factors.

Forms part of the ribosomal stalk which helps the ribosome interact with GTP-bound translation factors. Is thus essential for accurate translation. In Tropheryma whipplei (strain TW08/27) (Whipple's bacillus), this protein is Large ribosomal subunit protein bL12.